The sequence spans 349 residues: Lipoyl synthase (349 aa).

The [4Fe-4S] cluster site is built by Cys-55, Cys-60, Cys-66, Cys-81, Cys-85, Cys-88, and Ser-292. In terms of domain architecture, Radical SAM core spans 67-281 (WEDREATFLI…SDAAYELGIK (215 aa)). Positions 321-349 (LDSTTSQEASTLLERYGASEDTPVTASRR) are disordered.

Belongs to the radical SAM superfamily. Lipoyl synthase family. [4Fe-4S] cluster serves as cofactor.

It localises to the cytoplasm. It catalyses the reaction [[Fe-S] cluster scaffold protein carrying a second [4Fe-4S](2+) cluster] + N(6)-octanoyl-L-lysyl-[protein] + 2 oxidized [2Fe-2S]-[ferredoxin] + 2 S-adenosyl-L-methionine + 4 H(+) = [[Fe-S] cluster scaffold protein] + N(6)-[(R)-dihydrolipoyl]-L-lysyl-[protein] + 4 Fe(3+) + 2 hydrogen sulfide + 2 5'-deoxyadenosine + 2 L-methionine + 2 reduced [2Fe-2S]-[ferredoxin]. It functions in the pathway protein modification; protein lipoylation via endogenous pathway; protein N(6)-(lipoyl)lysine from octanoyl-[acyl-carrier-protein]: step 2/2. Its function is as follows. Catalyzes the radical-mediated insertion of two sulfur atoms into the C-6 and C-8 positions of the octanoyl moiety bound to the lipoyl domains of lipoate-dependent enzymes, thereby converting the octanoylated domains into lipoylated derivatives. The protein is Lipoyl synthase of Corynebacterium jeikeium (strain K411).